The following is a 237-amino-acid chain: Undecaprenyl-diphosphatase (237 aa).

7 helical membrane passes run Gln38–Ile58, Trp65–Phe85, Leu92–Phe112, Met126–Ile146, Ala166–Leu186, Val191–Ser211, and Gly217–Gly237.

The protein belongs to the UppP family.

It is found in the cell inner membrane. It catalyses the reaction di-trans,octa-cis-undecaprenyl diphosphate + H2O = di-trans,octa-cis-undecaprenyl phosphate + phosphate + H(+). In terms of biological role, catalyzes the dephosphorylation of undecaprenyl diphosphate (UPP). Confers resistance to bacitracin. This chain is Undecaprenyl-diphosphatase, found in Thermotoga maritima (strain ATCC 43589 / DSM 3109 / JCM 10099 / NBRC 100826 / MSB8).